The primary structure comprises 222 residues: Small ribosomal subunit protein eS8z (222 aa).

Disordered regions lie at residues Met1–Lys37 and Lys125–Pro147. A compositionally biased stretch (basic residues) spans Ile8–Lys26.

The protein belongs to the eukaryotic ribosomal protein eS8 family.

The chain is Small ribosomal subunit protein eS8z (RPS8A) from Arabidopsis thaliana (Mouse-ear cress).